A 246-amino-acid polypeptide reads, in one-letter code: Transcriptional regulatory protein LytR (246 aa).

Positions Lys2–Arg116 constitute a Response regulatory domain. Asp53 carries the post-translational modification 4-aspartylphosphate. One can recognise an HTH LytTR-type domain in the interval Leu141 to Leu245.

Homodimer; when phosphorylated. In terms of processing, phosphorylated and dephosphorylated by LytS.

It localises to the cytoplasm. Its function is as follows. Member of the two-component regulatory system LytR/LytS that regulates genes involved in autolysis, programmed cell death, biofilm formation and cell wall metabolism. Also participates in sensing and responding to host defense cationic antimicrobial peptides (HDPs). Upon phosphorylation by LytS, functions as a transcription regulator by direct binding to promoter regions of target genes including lrgA and lrgB, to positively regulate their expression. The protein is Transcriptional regulatory protein LytR (lytR) of Staphylococcus aureus (strain bovine RF122 / ET3-1).